The primary structure comprises 620 residues: 1-deoxy-D-xylulose-5-phosphate synthase (620 aa).

Thiamine diphosphate is bound by residues His-80 and 121–123; that span reads GHS. Asp-152 is a binding site for Mg(2+). Residues 153-154, Asn-181, Tyr-288, and Glu-370 each bind thiamine diphosphate; that span reads GA. Asn-181 serves as a coordination point for Mg(2+).

This sequence belongs to the transketolase family. DXPS subfamily. In terms of assembly, homodimer. It depends on Mg(2+) as a cofactor. The cofactor is thiamine diphosphate.

It catalyses the reaction D-glyceraldehyde 3-phosphate + pyruvate + H(+) = 1-deoxy-D-xylulose 5-phosphate + CO2. It participates in metabolic intermediate biosynthesis; 1-deoxy-D-xylulose 5-phosphate biosynthesis; 1-deoxy-D-xylulose 5-phosphate from D-glyceraldehyde 3-phosphate and pyruvate: step 1/1. In terms of biological role, catalyzes the acyloin condensation reaction between C atoms 2 and 3 of pyruvate and glyceraldehyde 3-phosphate to yield 1-deoxy-D-xylulose-5-phosphate (DXP). This Sodalis glossinidius (strain morsitans) protein is 1-deoxy-D-xylulose-5-phosphate synthase.